A 30-amino-acid chain; its full sequence is MSTFQALMLMLAIGSFIIALLTYIEKIDLP.

Residues 4 to 24 (FQALMLMLAIGSFIIALLTYI) traverse the membrane as a helical segment.

It localises to the cell membrane. In terms of biological role, toxic component of a type I toxin-antitoxin (TA) system; overexpression in the absence of cognate antisense antitoxin SR5 RNA leads to cell lysis. Base pairing occurs between the 3' UTRs of bsrE mRNA and SR5 RNA which leads to bsrE mRNA degradation initiated by RNase III (rnc) and RNase J1 (rnjA). Genetic evidence suggests an unidentified RNA-binding protein may exist that promotes TA RNA interaction. This Bacillus subtilis (strain 168) protein is Small toxic protein BsrE.